The chain runs to 157 residues: uncharacterized protein (157 aa).

The 138-residue stretch at Leu-9–Thr-146 folds into the N-acetyltransferase domain.

This is an uncharacterized protein from Bacillus cereus (strain AH187).